Consider the following 127-residue polypeptide: Glycine cleavage system H protein (127 aa).

Positions 22 to 104 constitute a Lipoyl-binding domain; that stretch reads KARIGITHFA…YEKAWMIVVE (83 aa). Lys63 bears the N6-lipoyllysine mark.

The protein belongs to the GcvH family. As to quaternary structure, the glycine cleavage system is composed of four proteins: P, T, L and H. It depends on (R)-lipoate as a cofactor.

The glycine cleavage system catalyzes the degradation of glycine. The H protein shuttles the methylamine group of glycine from the P protein to the T protein. Functionally, is also involved in protein lipoylation via its role as an octanoyl/lipoyl carrier protein intermediate. The protein is Glycine cleavage system H protein of Bacillus subtilis (strain 168).